Here is a 380-residue protein sequence, read N- to C-terminus: Cytochrome b (380 aa).

The next 4 helical transmembrane spans lie at 33–53 (FGSLLGACLIIQITTGLFLAM), 77–98 (WMIRHLHANGASMFFICLFLHI), 113–133 (WNIGIILLFTTMMTAFMGYVL), and 178–198 (FFTLHFMLPFIITALTTLHLL). Heme b-binding residues include His-83 and His-97. Residues His-182 and His-196 each contribute to the heme b site. His-201 provides a ligand contact to a ubiquinone. 4 helical membrane-spanning segments follow: residues 226-246 (IKDILGLLLFLLALMTLTLLS), 288-308 (LGGVMALMLSILILTTIPALH), 320-340 (LSQFLYWLLIADLLILTWIGG), and 347-367 (FITISQVASTLYFTTILLLMP).

The protein belongs to the cytochrome b family. The cytochrome bc1 complex contains 11 subunits: 3 respiratory subunits (MT-CYB, CYC1 and UQCRFS1), 2 core proteins (UQCRC1 and UQCRC2) and 6 low-molecular weight proteins (UQCRH/QCR6, UQCRB/QCR7, UQCRQ/QCR8, UQCR10/QCR9, UQCR11/QCR10 and a cleavage product of UQCRFS1). This cytochrome bc1 complex then forms a dimer. The cofactor is heme b.

It is found in the mitochondrion inner membrane. Functionally, component of the ubiquinol-cytochrome c reductase complex (complex III or cytochrome b-c1 complex) that is part of the mitochondrial respiratory chain. The b-c1 complex mediates electron transfer from ubiquinol to cytochrome c. Contributes to the generation of a proton gradient across the mitochondrial membrane that is then used for ATP synthesis. This chain is Cytochrome b (MT-CYB), found in Pongo abelii (Sumatran orangutan).